We begin with the raw amino-acid sequence, 86 residues long: Omega-theraphotoxin-Hhn1b (86 aa).

Positions 1 to 21 are cleaved as a signal peptide; it reads MKSIVFVALFGLALLAVVCSA. Residues 22 to 50 constitute a propeptide that is removed on maturation; that stretch reads SEDAHKELLKEVVRAMVVDKTDAVQAEER. 3 disulfides stabilise this stretch: Cys-52-Cys-66, Cys-59-Cys-71, and Cys-65-Cys-78.

This sequence belongs to the neurotoxin 10 (Hwtx-1) family. 17 (Hntx-9) subfamily. Expressed by the venom gland.

It is found in the secreted. Its function is as follows. Ion channel inhibitor. The sequence is that of Omega-theraphotoxin-Hhn1b from Cyriopagopus hainanus (Chinese bird spider).